The following is a 1400-amino-acid chain: S phase cyclin A-associated protein in the endoplasmic reticulum (1400 aa).

4 disordered regions span residues glutamate 36–lysine 61, valine 226–arginine 277, proline 517–lysine 550, and arginine 701–aspartate 723. The segment covering threonine 231–glutamine 243 has biased composition (polar residues). Over residues threonine 539–lysine 550 the composition is skewed to basic and acidic residues. A C2H2-type zinc finger spans residues lysine 792 to histidine 816. At serine 832 the chain carries Phosphoserine.

In terms of assembly, interacts with CCNA2/CDK2 complex, but not with CCNA2/CDC2, CCNB1/CDC2 or CCNE1/CDK2 complexes, at multiple phases of the cell cycle, including S and G2/M. Post-translationally, phosphorylated in vitro by the CCNA2/CDK2 complex. As to expression, widely expressed with high expression in testis. Isoform 1 is detected in various tissues, including retina, fetal and adult brain. Isoform 2 is expressed in the retina at high levels, and in the brain at very low levels.

The protein localises to the endoplasmic reticulum. It is found in the nucleus. CCNA2/CDK2 regulatory protein that transiently maintains CCNA2 in the cytoplasm. The sequence is that of S phase cyclin A-associated protein in the endoplasmic reticulum from Homo sapiens (Human).